Consider the following 853-residue polypeptide: E3 ubiquitin-protein ligase RNF216 (853 aa).

3 disordered regions span residues 33 to 102 (TISD…DDIV), 125 to 152 (PLEV…ASVD), and 165 to 228 (PYFQ…AHPL). Residues 53–73 (QQEDDLDDDVILTEDDSEDEY) show a composition bias toward acidic residues. Lysine 89 is covalently cross-linked (Glycyl lysine isopeptide (Lys-Gly) (interchain with G-Cter in SUMO2)). Residues lysine 339 and lysine 342 each participate in a glycyl lysine isopeptide (Lys-Gly) (interchain with G-Cter in SUMO2) cross-link. The residue at position 407 (serine 407) is a Phosphoserine. Glycyl lysine isopeptide (Lys-Gly) (interchain with G-Cter in SUMO2) cross-links involve residues lysine 413, lysine 418, lysine 436, lysine 447, and lysine 473. Residues 463 to 479 (VKQEQEFYEQKIKEMAE) are a coiled coil. A TRIAD supradomain region spans residues 499-716 (QLIECRCCYG…SPGAPCQECS (218 aa)). Positions 503, 506, 525, 528, 593, and 596 each coordinate Zn(2+). An RING-type 1 zinc finger spans residues 503 to 552 (CRCCYGEFPFEELTQCADAHLFCKECLIRYAQEAVFGSGKSELSCMEGSC). Residues 571–636 (YKYYERKAEE…LWKEHNGLTC (66 aa)) form an IBR-type zinc finger. Lysine 607 is covalently cross-linked (Glycyl lysine isopeptide (Lys-Gly) (interchain with G-Cter in SUMO2)). Zn(2+)-binding residues include cysteine 611, cysteine 616, cysteine 621, cysteine 624, histidine 631, and cysteine 636. Residues lysine 646 and lysine 654 each participate in a glycyl lysine isopeptide (Lys-Gly) (interchain with G-Cter in SUMO2) cross-link. The Zn(2+) site is built by cysteine 663 and cysteine 666. Residues 663–691 (CHKCGTGLIKSEGCNRMSCRCGAQMCYLC) form an RING-type 2; atypical zinc finger. Cysteine 676 is a catalytic residue. The Zn(2+) site is built by cysteine 681, cysteine 683, cysteine 688, cysteine 691, histidine 704, and cysteine 712. Residues 725–751 (TEDDEKLIEEIQKEAEEEQKRKNGENT) adopt a coiled-coil conformation. Glycyl lysine isopeptide (Lys-Gly) (interchain with G-Cter in SUMO2) cross-links involve residues lysine 753 and lysine 761.

As to quaternary structure, interacts with UBE2L3 and to some extent with UBE2L6. Interacts with TRAF3, TLR3, TLR4, TLR5 and TLR9. Isoform 3/ZIN binds RIPK1. Auto-ubiquitinated. In terms of processing, phosphorylation at Ser-719 enhances acceptor ubiquitin binding and chain-type specificity towards 'Lys-63' di-ubiquitin but not di-ubiquitin with other linkage types.

The protein localises to the cytoplasm. It is found in the cytoplasmic vesicle. Its subcellular location is the clathrin-coated vesicle. It carries out the reaction S-ubiquitinyl-[E2 ubiquitin-conjugating enzyme]-L-cysteine + [acceptor protein]-L-lysine = [E2 ubiquitin-conjugating enzyme]-L-cysteine + N(6)-ubiquitinyl-[acceptor protein]-L-lysine.. It functions in the pathway protein modification; protein ubiquitination. Its activity is regulated as follows. Allosterically activated by 'Lys-63'-linked di-ubiquitin. Its function is as follows. E3 ubiquitin ligase which accepts ubiquitin from specific E2 ubiquitin-conjugating enzymes, and then transfers it to substrates promoting their ubiquitination. Plays a role in the regulation of antiviral responses by promoting the degradation of TRAF3, TLR4 and TLR9. In turn, down-regulates NF-kappa-B and IRF3 activation as well as beta interferon production. Also participates in the regulation of autophagy by ubiquitinating BECN1 leading to its degradation and autophagy inhibition. Plays a role in ARC-dependent synaptic plasticity by mediating ARC ubiquitination resulting in its rapid proteasomal degradation. Plays aso an essential role in spermatogenesis and male fertility. Mechanistically, regulates meiosis by promoting the degradation of PRKACB through the ubiquitin-mediated lysosome pathway. Modulates the gonadotropin-releasing hormone signal pathway by affecting the stability of STAU2 that is required for the microtubule-dependent transport of neuronal RNA from the cell body to the dendrite. In Mus musculus (Mouse), this protein is E3 ubiquitin-protein ligase RNF216 (Rnf216).